The following is a 180-amino-acid chain: Acireductone dioxygenase (180 aa).

Residues histidine 88, histidine 90, glutamate 94, and histidine 133 each coordinate Fe(2+). Histidine 88, histidine 90, glutamate 94, and histidine 133 together coordinate Ni(2+).

This sequence belongs to the acireductone dioxygenase (ARD) family. In terms of assembly, monomer. Interacts with MMP14. It depends on Fe(2+) as a cofactor. Requires Ni(2+) as cofactor.

Its subcellular location is the cytoplasm. The protein resides in the nucleus. It is found in the cell membrane. The catalysed reaction is 1,2-dihydroxy-5-(methylsulfanyl)pent-1-en-3-one + O2 = 4-methylsulfanyl-2-oxobutanoate + formate + 2 H(+). It carries out the reaction 1,2-dihydroxy-5-(methylsulfanyl)pent-1-en-3-one + O2 = 3-(methylsulfanyl)propanoate + CO + formate + 2 H(+). The protein operates within amino-acid biosynthesis; L-methionine biosynthesis via salvage pathway; L-methionine from S-methyl-5-thio-alpha-D-ribose 1-phosphate: step 5/6. In terms of biological role, catalyzes 2 different reactions between oxygen and the acireductone 1,2-dihydroxy-3-keto-5-methylthiopentene (DHK-MTPene) depending upon the metal bound in the active site. Fe-containing acireductone dioxygenase (Fe-ARD) produces formate and 2-keto-4-methylthiobutyrate (KMTB), the alpha-ketoacid precursor of methionine in the methionine recycle pathway. Ni-containing acireductone dioxygenase (Ni-ARD) produces methylthiopropionate, carbon monoxide and formate, and does not lie on the methionine recycle pathway. The sequence is that of Acireductone dioxygenase from Gallus gallus (Chicken).